A 189-amino-acid polypeptide reads, in one-letter code: uncharacterized protein (189 aa).

The protein belongs to the flavoredoxin family. The cofactor is FMN.

This is an uncharacterized protein from Escherichia coli (strain K12).